Here is a 124-residue protein sequence, read N- to C-terminus: Small ribosomal subunit protein bS6 (124 aa).

Belongs to the bacterial ribosomal protein bS6 family.

Its function is as follows. Binds together with bS18 to 16S ribosomal RNA. The protein is Small ribosomal subunit protein bS6 of Haemophilus ducreyi (strain 35000HP / ATCC 700724).